The sequence spans 478 residues: Puromycin-sensitive aminopeptidase-like protein (478 aa).

Substrate contacts are provided by residues Glu180 and Gly316–Asn320. His352 provides a ligand contact to Zn(2+). The active-site Proton acceptor is the Glu353. Zn(2+) contacts are provided by His356 and Glu375.

The protein belongs to the peptidase M1 family. Zn(2+) serves as cofactor.

Functionally, aminopeptidase with broad substrate specificity to several peptides. This Homo sapiens (Human) protein is Puromycin-sensitive aminopeptidase-like protein (NPEPPSL1).